Consider the following 1372-residue polypeptide: Paired amphipathic helix protein Sin3-like 1 (1372 aa).

Residues 1-50 (MKRIRDDVYASGSQFRRPLGSSRGQLCGQSPVHGSGDTEEEEEGGSRRVS) are disordered. PAH domains lie at 51–121 (QKLT…LPKG) and 136–206 (KTVE…LPAS). Low complexity predominate over residues 210-222 (HSAAQHSRSQAQQ). Disordered regions lie at residues 210 to 244 (HSAAQHSRSQAQQYSDRGSDPPLLHQMQVEKERRR) and 272 to 323 (REQR…SGSA). Basic and acidic residues predominate over residues 272-315 (REQRKRLDKENRARRGRDLDDREAGQDNLHHFPEKRKSSRRAEA). The region spanning 331 to 400 (LKSMYKQAFV…DEFNQFFERC (70 aa)) is the PAH 3 domain. 3 disordered regions span residues 764 to 783 (DVNHSTSPNGEAAVSSGGDT), 791 to 817 (LKSAANGDENSSSGTFKHGIGLLNKDS), and 934 to 1056 (GLRS…AEGM). The span at 938-957 (DSSKGTRNSDDPEGPSRNEK) shows a compositional bias: basic and acidic residues. Acidic residues-rich tracts occupy residues 990–1013 (AEAEVEADAEVENEDDADDVDSEN) and 1028–1042 (SQDEDREEENGEHDE). Ser1049 carries the phosphoserine modification.

As to quaternary structure, interacts (via PAH3) with ALY2. Interacts (via PAH2) with TBP1. Interacts with ALY3, GATA21, TRP2, TKI1, VAL1, SKP1B, FBX5 and PUB14.

It localises to the nucleus. In terms of biological role, acts as a transcriptional repressor. A histone deacetylase (HDAC) activity is required for transcription repression. May play a role in telomere stability. This is Paired amphipathic helix protein Sin3-like 1 (SNL1) from Arabidopsis thaliana (Mouse-ear cress).